A 610-amino-acid chain; its full sequence is Alpha-fetoprotein (610 aa).

A signal peptide spans 1–18 (MKWVVSFFLLFLLNFSDS). Albumin domains follow at residues 19-210 (RTMH…TSIT), 211-403 (KELR…EELE), and 404-602 (KYIQ…ALIS). Residue H22 coordinates Cu(2+). Cystine bridges form between C99–C114, C113–C124, C148–C193, C192–C201, C224–C270, C269–C277, C289–C303, and C302–C314. 2 positions are modified to phosphoserine: S111 and S115. 2 N-linked (GlcNAc...) asparagine glycosylation sites follow: N197 and N251. S345 carries the post-translational modification Phosphoserine. Cystine bridges form between C385/C394, C417/C463, C462/C473, C486/C502, C501/C512, C539/C584, and C583/C592. S445 is modified (phosphoserine).

The protein belongs to the ALB/AFP/VDB family. As to quaternary structure, dimeric and trimeric forms have been found in addition to the monomeric form. Sulfated. As to expression, plasma.

Its subcellular location is the secreted. Its function is as follows. Binds copper, nickel, and fatty acids as well as, and bilirubin less well than, serum albumin. The protein is Alpha-fetoprotein (AFP) of Bos taurus (Bovine).